A 265-amino-acid polypeptide reads, in one-letter code: Undecaprenyl-diphosphatase (265 aa).

7 consecutive transmembrane segments (helical) span residues 38-58, 80-100, 107-127, 135-155, 175-195, 213-233, and 244-264; these read SDMF…IIYW, LIVA…LGFE, PIAW…WAAA, ITWL…VFPG, AAAT…ASGY, ALAI…KWLL, and FAIY…SGLI.

The protein belongs to the UppP family.

It is found in the cell inner membrane. The catalysed reaction is di-trans,octa-cis-undecaprenyl diphosphate + H2O = di-trans,octa-cis-undecaprenyl phosphate + phosphate + H(+). Catalyzes the dephosphorylation of undecaprenyl diphosphate (UPP). Confers resistance to bacitracin. This chain is Undecaprenyl-diphosphatase, found in Rhizobium etli (strain CIAT 652).